Reading from the N-terminus, the 599-residue chain is Elongation factor 4 (599 aa).

The region spanning 5-187 (SHIRNFSIIA…RLVQSIPAPE (183 aa)) is the tr-type G domain. GTP contacts are provided by residues 17–22 (DHGKST) and 134–137 (NKMD).

This sequence belongs to the TRAFAC class translation factor GTPase superfamily. Classic translation factor GTPase family. LepA subfamily.

It localises to the cell inner membrane. It carries out the reaction GTP + H2O = GDP + phosphate + H(+). In terms of biological role, required for accurate and efficient protein synthesis under certain stress conditions. May act as a fidelity factor of the translation reaction, by catalyzing a one-codon backward translocation of tRNAs on improperly translocated ribosomes. Back-translocation proceeds from a post-translocation (POST) complex to a pre-translocation (PRE) complex, thus giving elongation factor G a second chance to translocate the tRNAs correctly. Binds to ribosomes in a GTP-dependent manner. This is Elongation factor 4 from Pseudomonas entomophila (strain L48).